Reading from the N-terminus, the 704-residue chain is Meprin A subunit beta (704 aa).

A signal peptide spans 1-20 (MDARHWPWFLVFATFLLVSG). The propeptide occupies 21–64 (LPAPEKFVKDIDGGIDQDIFDINEDLGLDLFEGDIKLEASGRNS). At 21–654 (LPAPEKFVKD…RCEKRGSTKD (634 aa)) the chain is on the extracellular side. Residues 63 to 257 (NSIIGDNYRW…LKLNQLYSCT (195 aa)) enclose the Peptidase M12A domain. Disulfide bonds link Cys104–Cys256, Cys125–Cys145, and Cys266–Cys428. Zn(2+) is bound at residue His153. The active site involves Glu154. Zn(2+)-binding residues include His157 and His163. N-linked (GlcNAc...) asparagine glycosylation is found at Asn193, Asn219, Asn316, Asn422, Asn437, Asn528, Asn547, and Asn592. The MAM domain maps to 261-430 (SFMDSCDFEL…INLSETRCPH (170 aa)). In terms of domain architecture, MATH spans 431-585 (HIWHIQNFTQ…GDDVYILLTV (155 aa)). The EGF-like domain occupies 607-647 (VHNACSEVECQNGGICTLQEGRAECKCPAGEDWWYMGKRCE). 3 disulfides stabilise this stretch: Cys611/Cys622, Cys616/Cys631, and Cys633/Cys646. Residues 655–678 (TIVIAVSSTVTVFAVMLIITLISV) traverse the membrane as a helical segment. Residues 679-704 (YCTRRKYRKKASAKTAAMNLENQHAF) lie on the Cytoplasmic side of the membrane. Thr693 is subject to Phosphothreonine.

Homotetramer consisting of disulfide-linked beta subunits, or heterotetramer of two alpha and two beta subunits formed by non-covalent association of two disulfide-linked heterodimers. Interacts with MBL2 through its carbohydrate moiety. This interaction may inhibit its catalytic activity. Interacts with TSPAN8. Zn(2+) is required as a cofactor. In terms of processing, N-glycosylated; contains high mannose and/or complex biantennary structures. Post-translationally, proteolytically activated by trypsin in the intestinal lumen and kallikrein-related peptidases in other tissues. Phosphorylated by PKC at multiple sites of its cytoplasmic part. Phosphorylation dcreases activity at the cell surface, leading to diminished substrate cleavage. Kidney, intestinal brush borders and salivary ducts.

The protein resides in the cell membrane. Its subcellular location is the secreted. It carries out the reaction Hydrolysis of proteins, including azocasein, and peptides. Hydrolysis of 5-His-|-Leu-6, 6-Leu-|-Cys-7, 14-Ala-|-Leu-15 and 19-Cys-|-Gly-20 bonds in insulin B chain.. Strongly inhibited by fetuin-A/AHSG. In terms of biological role, membrane metallopeptidase that sheds many membrane-bound proteins. Exhibits a strong preference for acidic amino acids at the P1' position. Known substrates include: FGF19, VGFA, IL1B, IL18, procollagen I and III, E-cadherin, KLK7, gastrin, ADAM10, tenascin-C. The presence of several pro-inflammatory cytokine among substrates implicate MEP1B in inflammation. It is also involved in tissue remodeling due to its capability to degrade extracellular matrix components. The sequence is that of Meprin A subunit beta (Mep1b) from Rattus norvegicus (Rat).